We begin with the raw amino-acid sequence, 395 residues long: Protein UNIFOLIATA (395 aa).

2 disordered regions span residues 147–170 and 185–223; these read SQEG…GGGS and QIRR…GERQ. Positions 202-211 are enriched in acidic residues; the sequence is EEGEEEEEDN. DNA-binding regions lie at residues 224-228, 293-300, and 364-367; these read REHPF, NKPKMRHY, and YGPT.

The protein belongs to the FLO/LFY family. In terms of tissue distribution, highly expressed in leaf, leaflet, inflorescence and lateral shoot primordia on the main shoot axis, and in floral organ and carpel primordia.

It localises to the nucleus. Functionally, may regulate indeterminacy during leaf and flower development. The protein is Protein UNIFOLIATA (UNI) of Pisum sativum (Garden pea).